The chain runs to 102 residues: Integration host factor subunit beta (102 aa).

This sequence belongs to the bacterial histone-like protein family. As to quaternary structure, heterodimer of an alpha and a beta chain.

In terms of biological role, this protein is one of the two subunits of integration host factor, a specific DNA-binding protein that functions in genetic recombination as well as in transcriptional and translational control. The polypeptide is Integration host factor subunit beta (Rhizobium rhizogenes (strain K84 / ATCC BAA-868) (Agrobacterium radiobacter)).